Consider the following 40-residue polypeptide: Dolichyl-diphosphooligosaccharide--protein glycosyltransferase subunit 4 (40 aa).

Over 1–4 the chain is Lumenal; the sequence is MISD. Residues 5-25 form a helical membrane-spanning segment; that stretch reads VQLAIFSNVLGVFLFLLVVAY. Topologically, residues 26–40 are cytoplasmic; the sequence is HYINANTGKPSAKAK.

It belongs to the OST4 family. As to quaternary structure, component of the oligosaccharyltransferase (OST) complex.

The protein resides in the endoplasmic reticulum membrane. Subunit of the oligosaccharyl transferase (OST) complex that catalyzes the initial transfer of a defined glycan (Glc(3)Man(9)GlcNAc(2) in eukaryotes) from the lipid carrier dolichol-pyrophosphate to an asparagine residue within an Asn-X-Ser/Thr consensus motif in nascent polypeptide chains, the first step in protein N-glycosylation. N-glycosylation occurs cotranslationally and the complex associates with the Sec61 complex at the channel-forming translocon complex that mediates protein translocation across the endoplasmic reticulum (ER). All subunits are required for a maximal enzyme activity. The polypeptide is Dolichyl-diphosphooligosaccharide--protein glycosyltransferase subunit 4 (Drosophila yakuba (Fruit fly)).